We begin with the raw amino-acid sequence, 512 residues long: MNLQLDYFSITSFLVFLVVLFRIVSDWKKKSTNLRLPPGPSKLPIIGSVHHLIGMDVDLPYHAFADLAKKYGPLMHLQLGQMSLVVASSAKMFKELMKENDLAISQRPVPYVARVLNDAGRDIAFVPYGDYWRQIRKISRMELFSVRKVQSLYYIREDQSNKMIDAIRGSSETVMNLSKAVSDYTSTVVARAAFGSGCKDQDKFIKLSLEMVAAAGAVSTLPDMFPALGFIPILSGKKAFLQNIQKEADKILDYIIDEHIQRTKSKDYDGKESDKEDIVDVLLRLEKTGELEIPITTQDIKAVIWSVFAGGTDTSSTTTLWAMSELMRNPKVMEKVQAEVREKLKGKKEILEADIQDLPYMRAVIKETLRLRIPGPLLLPRETMEPIEVDGYVIPEKTKILFNAWAVTRDPELWENPESFIPERFIEKQIDFKGTNYEFTPFGSGRRICPGMNFGIANVELPLAKLLYYFNWQLPHGMKPEDLDMTAKFGVVCGRKNDLFLIPTPYNIEGQN.

Residues 1–21 (MNLQLDYFSITSFLVFLVVLF) form a helical membrane-spanning segment. Cysteine 449 contributes to the heme binding site.

It belongs to the cytochrome P450 family. The cofactor is heme.

The protein resides in the membrane. The catalysed reaction is tirucalla-7,24-dien-3beta-ol + 2 reduced [NADPH--hemoprotein reductase] + 2 O2 = dihydroniloticin + 2 oxidized [NADPH--hemoprotein reductase] + 2 H2O + 2 H(+). Its pathway is secondary metabolite biosynthesis; terpenoid biosynthesis. Its function is as follows. Monooxygenase involved in the biosynthesis of limonoids triterpene natural products such as azadirachtin, an antifeedant widely used as bioinsecticide, and possessing many medicinal applications including anti-tumoral, anti-malarial, anti-rheumatic, antibacterial, anti-inflammatory, anti-pyretic and diuretic effects. Catalyzes the conversion of tirucalladienol to dihydroniloticin. This is Dihydroniloticin synthase CYP71CD2 from Azadirachta indica (Neem tree).